Here is a 283-residue protein sequence, read N- to C-terminus: Alkaline ceramidase (283 aa).

Ca(2+) contacts are provided by Asp-28, Trp-29, Glu-31, Asn-33, and Glu-42. 2 helical membrane-spanning segments follow: residues Phe-43 to Phe-63 and Phe-69 to Met-89. His-92 provides a ligand contact to Zn(2+). A run of 4 helical transmembrane segments spans residues Ile-98–Phe-118, Thr-134–Trp-151, Pro-154–Thr-174, and Leu-187–Cys-209. Residues His-221 and His-225 each coordinate Zn(2+). Residues Gly-222–Phe-242 form a helical membrane-spanning segment.

This sequence belongs to the alkaline ceramidase family. It depends on Zn(2+) as a cofactor. In terms of tissue distribution, expressed in the central midgut of late embryos. In brain, it is present at the interhemispheric junction and in groups of cells in the central brain.

The protein resides in the membrane. It catalyses the reaction an N-acylsphing-4-enine + H2O = sphing-4-enine + a fatty acid. Functionally, hydrolyzes the sphingolipid ceramide into sphingosine and free fatty acid. The chain is Alkaline ceramidase (bwa) from Drosophila melanogaster (Fruit fly).